A 306-amino-acid chain; its full sequence is Tyrosine recombinase EUBREC_2677 (306 aa).

The Core-binding (CB) domain occupies 2 to 84 (NNLQTHISSY…SIKAFFHYLE (83 aa)). Positions 106–296 (ILPKTIPLYI…AVSKQKDILI (191 aa)) constitute a Tyr recombinase domain. Catalysis depends on residues R155, K179, H248, R251, and H274. Catalysis depends on Y283, which acts as the O-(3'-phospho-DNA)-tyrosine intermediate.

The protein belongs to the 'phage' integrase family.

It is found in the cytoplasm. Functionally, site-specific tyrosine recombinase, which acts by catalyzing the cutting and rejoining of the recombining DNA molecules. The protein is Tyrosine recombinase EUBREC_2677 of Agathobacter rectalis (strain ATCC 33656 / DSM 3377 / JCM 17463 / KCTC 5835 / VPI 0990) (Eubacterium rectale).